The primary structure comprises 92 residues: Acyl-CoA-binding protein (92 aa).

The 86-residue stretch at 3-88 (LKEDFEEHAE…VKQLLEAEAS (86 aa)) folds into the ACB domain. Residues 30 to 34 (YGLYK), Lys-56, and Tyr-75 contribute to the an acyl-CoA site.

The protein belongs to the ACBP family.

Its function is as follows. Binds medium- and long-chain acyl-CoA esters with very high affinity and may function as an intracellular carrier of acyl-CoA esters. The polypeptide is Acyl-CoA-binding protein (Brassica napus (Rape)).